The following is an 80-amino-acid chain: Toxin Acra I-3 (80 aa).

The first 22 residues, 1–22 (MMKLVLLSVIVILFSLIGSIHG), serve as a signal peptide directing secretion. The LCN-type CS-alpha/beta domain occupies 25–80 (VPGNYPLDSSGNKYPCTVLGDNQSCIDVCKKHGVKYGYCYGFKCWCEYLKDKNVSL). 3 disulfide bridges follow: Cys40/Cys63, Cys49/Cys68, and Cys53/Cys70.

Belongs to the long (3 C-C) scorpion toxin superfamily. Sodium/Potassium channel inhibitor family. Expressed by the venom gland.

Its subcellular location is the secreted. Functionally, probable neurotoxin that inhibits ion channels. Is toxic to mice. The protein is Toxin Acra I-3 of Androctonus crassicauda (Arabian fat-tailed scorpion).